A 608-amino-acid chain; its full sequence is Ceramide kinase (608 aa).

Residues 160-367 (ERPRNLLVFV…LDAMQVVRWK (208 aa)) form the DAGKc domain. ATP is bound by residues 170 to 174 (HPKSG), Thr-201, and 230 to 236 (GDGFFNE). Residue 229–232 (GGDG) participates in substrate binding. Catalysis depends on Asp-231, which acts as the Proton donor/acceptor. The segment at 254–280 (PSDSFNSVQSRGSSSVPEPGDEVHETD) is disordered. A compositionally biased stretch (polar residues) spans 255–269 (SDSFNSVQSRGSSSV). An ATP-binding site is contributed by Ser-329.

The cofactor is Ca(2+).

The catalysed reaction is an N-acylsphing-4-enine + ATP = an N-acylsphing-4-enine 1-phosphate + ADP + H(+). Its function is as follows. Catalyzes specifically the phosphorylation of ceramide to form ceramide 1-phosphate. Possesses high activity on ceramide analogs (C6, C8 synthetic ceramides) and lower activity on C6 and C8 dihydroceramides. Has weak activity on natural ceramides (a mixture of ceramides from bovine brain) and the synthetic substrate C2 ceramide. Has very poor activity on diacylglycerol and sphingosine. Ceramide is a critical sphingolipid metabolite that induces programmed cell death (PCD) in plants and ceramide-1-phosphate has a PCD suppressive effect. Thus, ceramide phosphorylation plays a role in the modulation of PCD and CERK activity is crucial for the maintenance of cell viability. The polypeptide is Ceramide kinase (CERK) (Arabidopsis thaliana (Mouse-ear cress)).